Reading from the N-terminus, the 89-residue chain is Large ribosomal subunit protein bL27 (89 aa).

Residues 1-26 are disordered; the sequence is MATKKAGGSSKNGRDSAGRRLGLKKS.

This sequence belongs to the bacterial ribosomal protein bL27 family.

This chain is Large ribosomal subunit protein bL27, found in Orientia tsutsugamushi (strain Ikeda) (Rickettsia tsutsugamushi).